Consider the following 344-residue polypeptide: NADH-ubiquinone oxidoreductase chain 1 (344 aa).

10 helical membrane-spanning segments follow: residues 18 to 38 (FIIILLFIKSLSYIIPLIIAI), 58 to 78 (PNIVGIFGLLQPIADGLKLLL), 89 to 109 (IFIFIIAPILTFFLALCAWAI), 123 to 143 (IGILYLLAISSLGVYGIIISG), 159 to 179 (AAQIISYEVSIGLIIINVLLC), 195 to 215 (IWYIFPLFPLFLMFFISSLAE), 228 to 248 (AELVAGYNVEYSAMGFALFFL), 253 to 273 (NIILISAVSTILFLAGWLPPF), 281 to 301 (IPNSIWFGFKTIIILVLFIWV), and 316 to 336 (LGWKIFLPLSLAWLMLTSGIL).

Belongs to the complex I subunit 1 family.

It localises to the mitochondrion inner membrane. It catalyses the reaction a ubiquinone + NADH + 5 H(+)(in) = a ubiquinol + NAD(+) + 4 H(+)(out). In terms of biological role, core subunit of the mitochondrial membrane respiratory chain NADH dehydrogenase (Complex I) that is believed to belong to the minimal assembly required for catalysis. Complex I functions in the transfer of electrons from NADH to the respiratory chain. The immediate electron acceptor for the enzyme is believed to be ubiquinone. This is NADH-ubiquinone oxidoreductase chain 1 (ND1) from Cyanidium caldarium (Red alga).